Here is a 396-residue protein sequence, read N- to C-terminus: NADH-quinone oxidoreductase subunit D (396 aa).

It belongs to the complex I 49 kDa subunit family. NDH-1 is composed of 14 different subunits. Subunits NuoB, C, D, E, F, and G constitute the peripheral sector of the complex.

The protein localises to the cell inner membrane. It catalyses the reaction a quinone + NADH + 5 H(+)(in) = a quinol + NAD(+) + 4 H(+)(out). Functionally, NDH-1 shuttles electrons from NADH, via FMN and iron-sulfur (Fe-S) centers, to quinones in the respiratory chain. The immediate electron acceptor for the enzyme in this species is believed to be ubiquinone. Couples the redox reaction to proton translocation (for every two electrons transferred, four hydrogen ions are translocated across the cytoplasmic membrane), and thus conserves the redox energy in a proton gradient. The protein is NADH-quinone oxidoreductase subunit D of Rhodopseudomonas palustris (strain BisA53).